The chain runs to 201 residues: Molybdenum cofactor guanylyltransferase (201 aa).

GTP is bound by residues 15-17 (LAG), lysine 28, aspartate 74, and aspartate 104. Aspartate 104 is a Mg(2+) binding site.

It belongs to the MobA family. In terms of assembly, monomer. Requires Mg(2+) as cofactor.

It localises to the cytoplasm. It catalyses the reaction Mo-molybdopterin + GTP + H(+) = Mo-molybdopterin guanine dinucleotide + diphosphate. Functionally, transfers a GMP moiety from GTP to Mo-molybdopterin (Mo-MPT) cofactor (Moco or molybdenum cofactor) to form Mo-molybdopterin guanine dinucleotide (Mo-MGD) cofactor. The sequence is that of Molybdenum cofactor guanylyltransferase from Pseudomonas syringae pv. syringae (strain B728a).